Reading from the N-terminus, the 404-residue chain is Pectate lyase E (404 aa).

Positions 1–41 are cleaved as a signal peptide; the sequence is MNNSRMSSVSTQKTTGRSALGTKSALAAIIATTMMVSVASA. Ca(2+) is bound by residues D182 and D225. R278 is an active-site residue.

This sequence belongs to the polysaccharide lyase 1 family. PLBC subfamily. Ca(2+) is required as a cofactor.

The protein localises to the secreted. It carries out the reaction Eliminative cleavage of (1-&gt;4)-alpha-D-galacturonan to give oligosaccharides with 4-deoxy-alpha-D-galact-4-enuronosyl groups at their non-reducing ends.. Its pathway is glycan metabolism; pectin degradation; 2-dehydro-3-deoxy-D-gluconate from pectin: step 2/5. In terms of biological role, involved in maceration and soft-rotting of plant tissue. Pectate lyases have been implicated as pathogenicity factors which induce maceration or rotting of plant tissue. PelE is sufficient to induce these effects under laboratory conditions. The sequence is that of Pectate lyase E (pelE) from Dickeya chrysanthemi (Pectobacterium chrysanthemi).